The chain runs to 350 residues: Transmembrane protein 185A (350 aa).

Helical transmembrane passes span 16 to 36 (LIYA…DGII), 41 to 61 (WAVF…ASVG), 81 to 101 (FKAM…EVLV), 111 to 131 (FWLL…AACV), 177 to 197 (ILMS…VLFL), 211 to 231 (ITMA…EILL), and 240 to 260 (AFSC…LMAT). The tract at residues 298-350 (DLHHEDNEETEETPVPEPPKIAPMFRKKARVVITQSPGKYVLPPPKLNIEMPD) is mediates interaction with MAP1B.

Belongs to the TMEM185 family. As to quaternary structure, interacts with MAP1B.

The protein localises to the cell projection. It is found in the dendrite. Its subcellular location is the membrane. The protein is Transmembrane protein 185A (TMEM185A) of Homo sapiens (Human).